Here is a 668-residue protein sequence, read N- to C-terminus: E3 ubiquitin-protein ligase RNF139 (668 aa).

Ala-2 is subject to N-acetylalanine. Helical transmembrane passes span 51-71, 85-105, 125-145, 154-174, 178-198, 293-313, 323-343, 356-376, 390-410, 420-440, and 470-490; these read IGLQIFLRLLGIVVSSIVLIL, AFLLAATSVLVNYYAALHIDF, SLWMALIVLQLTFGIGYVTLL, LMILNILVPIIGLITELPLHI, VVLMSSLILIFNTVLVLAVKL, GMSAVISSIAHYLGLGILAFI, LGFVAPVLFFILALQTGLSGL, MCLLLTAVLHFIHGMTDPVLM, FPVLFVSACLFILPVLLSYVL, LFAVTAFCVELCLKVIVSLTV, and IIEFIFGVVMFGNGAYTMMFE. An RING-type; atypical zinc finger spans residues 547-586; that stretch reads CAICYHEFTTSARITPCNHYFHALCLRKWLYIQDTCPMCH. The interval 602–668 is disordered; it reads SNNNGFIAPN…AAAEFNDDTD (67 aa). A compositionally biased stretch (basic and acidic residues) spans 618–630; the sequence is EALREDAAGSDRE. A compositionally biased stretch (acidic residues) spans 631–641; sequence LNEDDSTDCDD. Ser-636 is modified (phosphoserine). Thr-637 and Thr-667 each carry phosphothreonine.

Interacts with VHL. Interacts with MHC class I and HM13. Component of SCAP-SREBP complex composed of SREBF2, SCAP and RNF139; the complex hampers the interaction between SCAP and SEC24B, thereby reducing SREBF2 proteolytic processing. Interacts with SREBF2 (via C-terminal domain). Interacts with SCAP; the interaction inhibits the interaction of SCAP with SEC24B and hampering the ER to Golgi transport of the SCAP-SREBP complex. Interacts with SEC24B. Interacts with INSIG1 and INSIG2. Interacts with EIF3F and EIF3H; the interaction leads to protein translation inhibitions in a ubiquitination-dependent manner. Interacts with XBP1 isoform 1; the interaction induces ubiquitination and degradation of XBP1 isoform 1. Interacts with AUP1, AMFR and UBE2G2; interaction with AUP1 facilitates interaction of RNF139 with ubiquitin-conjugating enzyme UBE2G2 and ubiquitin ligase AMFR/gp78, leading to sterol-induced ubiquitination of HMGCR and its subsequent proteasomal degradation. Autoubiquitinated. Ubiquitination is induced by sterol and leads to ist degradation via the ubiquitin-proteasome pathway.

Its subcellular location is the endoplasmic reticulum membrane. The catalysed reaction is S-ubiquitinyl-[E2 ubiquitin-conjugating enzyme]-L-cysteine + [acceptor protein]-L-lysine = [E2 ubiquitin-conjugating enzyme]-L-cysteine + N(6)-ubiquitinyl-[acceptor protein]-L-lysine.. Its pathway is protein modification; protein ubiquitination. In terms of biological role, E3-ubiquitin ligase; acts as a negative regulator of cell proliferation through mechanisms involving G2/M arrest and cell death. Required for MHC class I ubiquitination in cells expressing the cytomegalovirus protein US2 before dislocation from the endoplasmic reticulum (ER). Affects SREBP processing by hindering the SREBP-SCAP complex translocation from the ER to the Golgi, thereby reducing SREBF2 target gene expression. Involved in the sterol-accelerated degradation of HMGCR. This is achieved through binding to INSIG1 and/or INSIG2 at the ER membrane. In addition, interaction of RNF139 with AUP1 facilitates interaction of RNF139 with ubiquitin-conjugating enzyme UBE2G2 and ubiquitin ligase AMFR, leading to ubiquitination of HMGCR. The ubiquitinated HMGCR is then released from the ER by the complex into the cytosol for subsequent destruction. Required for INSIG1 ubiquitination. May be required for EIF3 complex ubiquitination. This Mus musculus (Mouse) protein is E3 ubiquitin-protein ligase RNF139.